The following is a 166-amino-acid chain: NADPH-dependent 7-cyano-7-deazaguanine reductase (166 aa).

The active-site Thioimide intermediate is the C57. D64 serves as the catalytic Proton donor. Substrate contacts are provided by residues 79-81 (VES) and 98-99 (HE).

Belongs to the GTP cyclohydrolase I family. QueF type 1 subfamily.

The protein localises to the cytoplasm. The enzyme catalyses 7-aminomethyl-7-carbaguanine + 2 NADP(+) = 7-cyano-7-deazaguanine + 2 NADPH + 3 H(+). Its pathway is tRNA modification; tRNA-queuosine biosynthesis. In terms of biological role, catalyzes the NADPH-dependent reduction of 7-cyano-7-deazaguanine (preQ0) to 7-aminomethyl-7-deazaguanine (preQ1). The sequence is that of NADPH-dependent 7-cyano-7-deazaguanine reductase from Staphylococcus haemolyticus (strain JCSC1435).